The following is an 84-amino-acid chain: CDC42 small effector protein 2-A (84 aa).

S-palmitoyl cysteine attachment occurs at residues cysteine 10 and cysteine 11. Residues 29-42 form the CRIB domain; that stretch reads IGEPTNFVHTAHVG.

It belongs to the CDC42SE/SPEC family.

The protein localises to the cytoplasm. It is found in the cytoskeleton. Its subcellular location is the cell membrane. Probably involved in the organization of the actin cytoskeleton by acting downstream of CDC42, inducing actin filament assembly. This Xenopus tropicalis (Western clawed frog) protein is CDC42 small effector protein 2-A (cdc42se2-A).